The sequence spans 431 residues: Acyl transferase 8 (431 aa).

The Proton acceptor role is filled by H169. Disordered stretches follow at residues V220 to A247, H260 to R313, and G331 to T400. A compositionally biased stretch (low complexity) spans R224–P234. The segment covering D264–R273 has biased composition (gly residues). Basic residues-rich tracts occupy residues E297–R306 and G335–P380. The segment covering Q381–H394 has biased composition (basic and acidic residues).

This sequence belongs to the plant acyltransferase family.

Functionally, involved in the incorporation of ferulate into the cell wall. May act as arabinoxylan feruloyl transferase. The protein is Acyl transferase 8 of Oryza sativa subsp. japonica (Rice).